Consider the following 604-residue polypeptide: MHRYRTHTCGALRPSDVGATVRLSGWCHRVRDHGGVLFIDLRDHYGVTQCVVDADSAAFRAAEAVRSEWVIRVDGRVRRRPEGTENADLPTGAVELYITDLEVLGQAVELPMPVFGELDYPEETRLRYRFLDLRREKLHANIMKRGAIIDSLRRRMREGGFFEFQTPILTASSPEGARDFLVPSRLHPGKFYALPQAPQQFKQLTMIAGFDRYFQIAPCFRDEDARADRSPGEFYQLDIEMSFVTQEDVFQAVEPVLRGVFEEFAEGWRVTGTFPRIPYAEAMLKYGVDKPDLRNPLIIVDVTQEFSAEAVTFNAFKSVIRAGGVVRAIPAPGAGAQPRSFFDRLNNWARGEGAPGLGYIVFEEEGGVLSGRGPIAKFVPPEVQAAIAAKAGLKAGDAVFFAAGVEAKAAGLAGKARIRIGDDLGLTDKDQFAFCWITDFPMYEWNEDEKRIDFSHNPFSMPNYDHDGFLGLDPADAETILGIKAFQYDIVCNGIELSSGAIRNHRPDVMEKAFAIAGYGREVLEQKFGGMLNALRMGAPPHGGIAPGVDRIVMLLCHEPNIREVVLFPMNQRAEDLMMGAPSEVTPKQLRELHIRLNLPDRSA.

Residue Glu-175 coordinates L-aspartate. Residues 199-202 (QQFK) form an aspartate region. Residues Arg-221 and His-456 each contribute to the L-aspartate site. ATP is bound at residue 221–223 (RDE). Glu-496 contributes to the ATP binding site. Arg-503 lines the L-aspartate pocket. 548 to 551 (GVDR) serves as a coordination point for ATP.

Belongs to the class-II aminoacyl-tRNA synthetase family. Type 1 subfamily. Homodimer.

The protein localises to the cytoplasm. It catalyses the reaction tRNA(Asx) + L-aspartate + ATP = L-aspartyl-tRNA(Asx) + AMP + diphosphate. Aspartyl-tRNA synthetase with relaxed tRNA specificity since it is able to aspartylate not only its cognate tRNA(Asp) but also tRNA(Asn). Reaction proceeds in two steps: L-aspartate is first activated by ATP to form Asp-AMP and then transferred to the acceptor end of tRNA(Asp/Asn). The protein is Aspartate--tRNA(Asp/Asn) ligase of Methylobacterium sp. (strain 4-46).